The sequence spans 127 residues: Glycine cleavage system H protein (127 aa).

The Lipoyl-binding domain occupies 22 to 104; sequence EVVIGITHFA…YEGAWMVKVE (83 aa). Lysine 63 is subject to N6-lipoyllysine.

This sequence belongs to the GcvH family. The glycine cleavage system is composed of four proteins: P, T, L and H. Requires (R)-lipoate as cofactor.

Functionally, the glycine cleavage system catalyzes the degradation of glycine. The H protein shuttles the methylamine group of glycine from the P protein to the T protein. Its function is as follows. Is also involved in protein lipoylation via its role as an octanoyl/lipoyl carrier protein intermediate. The chain is Glycine cleavage system H protein from Bacillus cereus (strain ATCC 10987 / NRS 248).